The following is a 336-amino-acid chain: CST complex subunit STN1 (336 aa).

Positions 49–126 (VDILGTVVCV…EVVASIFYKV (78 aa)) form a DNA-binding region, OB. Winged helix-turn-helix (wHTH) stretches follow at residues 162–263 (QSQE…YVTD) and 264–336 (HDKE…YTAF).

This sequence belongs to the CTC1 family. Component of the CST complex.

It localises to the nucleus. The protein resides in the chromosome. It is found in the telomere. In terms of biological role, component of the CST complex proposed to act as a specialized replication factor promoting DNA replication under conditions of replication stress or natural replication barriers such as the telomere duplex. The CST complex binds single-stranded DNA with high affinity in a sequence-independent manner, while isolated subunits bind DNA with low affinity by themselves. Initially the CST complex has been proposed to protect telomeres from DNA degradation. However, the CST complex has been shown to be involved in several aspects of telomere replication. The polypeptide is CST complex subunit STN1 (Aquarana catesbeiana (American bullfrog)).